Consider the following 172-residue polypeptide: Putative phosphoesterase BcerKBAB4_1135 (172 aa).

H34 acts as the Proton donor in catalysis. Short sequence motifs (HXTX) lie at residues 34-37 (HITL) and 115-118 (HLTI). H115 (proton acceptor) is an active-site residue.

It belongs to the 2H phosphoesterase superfamily. YjcG family.

This chain is Putative phosphoesterase BcerKBAB4_1135, found in Bacillus mycoides (strain KBAB4) (Bacillus weihenstephanensis).